Reading from the N-terminus, the 293-residue chain is Protein phosphatase 1 regulatory subunit 3B (293 aa).

The CBM21 domain occupies 129–237; that stretch reads RQRIENDHVC…NNQGKNYRII (109 aa).

As to quaternary structure, interacts with glycogen, PPP1CC catalytic subunit of PP1 and PYGL. Associates with glycogen particles. Forms complexes with debranching enzyme, glycogen phosphorylase, glycogen synthase and phosphorylase kinase which is necessary for its regulation of PP1 activity.

In terms of biological role, acts as a glycogen-targeting subunit for phosphatase PP1. Facilitates interaction of the PP1 with enzymes of the glycogen metabolism and regulates its activity. Suppresses the rate at which PP1 dephosphorylates (inactivates) glycogen phosphorylase and enhances the rate at which it activates glycogen synthase and therefore limits glycogen breakdown. This is Protein phosphatase 1 regulatory subunit 3B (ppp1r3b) from Danio rerio (Zebrafish).